The following is a 413-amino-acid chain: Unsaturated 3S-rhamnoglycuronyl hydrolase (413 aa).

Residues 1-21 (MNHTKLKLSAVALTLALGLSA) form the signal peptide. Cysteine 22 is lipidated: N-palmitoyl cysteine. A lipid anchor (S-diacylglycerol cysteine) is attached at cysteine 22. The active-site Proton donor is the aspartate 203.

This sequence belongs to the glycosyl hydrolase 105 family.

Its subcellular location is the cell membrane. Functionally, glucuronyl hydrolase involved in ulvan degradation. Ulvan is the main polysaccharide component of the Ulvales (green seaweed) cell wall. It is composed of disaccharide building blocks comprising 3-sulfated rhamnose (Rha3S) linked to D-glucuronic acid (GlcA), L-iduronic acid (IduA), or D-xylose (Xyl). Unsaturated 3S-rhamnoglycuronyl hydrolase works together with ulvan lyases to fully degrade the ulvan polymer, catalyzing specifically the cleavage of the unsaturated 4-deoxy-L-threo-hex-4-enopyranosiduronic acid (deltaUA) of the deltaUA-oligosaccharides deltaUA-Rha3S, deltaUA-Rha3S-IduA-Rha3S and deltaUA-Rha3S-Xyl-Rha3S, the end products of the ulvan lyase reaction. The protein is Unsaturated 3S-rhamnoglycuronyl hydrolase of Alteromonas sp. (strain LOR).